The primary structure comprises 212 residues: EFC-associated protein OPG053 (212 aa).

The Virion surface portion of the chain corresponds to Met1–Asp175. 3 cysteine pairs are disulfide-bonded: Cys33-Cys55, Cys47-Cys127, and Cys107-Cys149. The chain crosses the membrane as a helical span at residues Pro176–Ile196. At Arg197–Val212 the chain is on the intravirion side.

It belongs to the orthopoxvirus OPG053 family. Component of the entry fusion complex (EFC) composed of OPG053, OPG076, OPG086, OPG094, OPG095, OPG099, OPG107, OPG143, OPG104, OPG147 and OPG155. Except for OPG095 and OPG052, each of the EFC proteins is required for assembly or stability of the complex. Post-translationally, disulfid bonds are oxidized in the cytoplasm by OPG088 protein. In terms of processing, unglycosylated because produced in viral factories instead of the classic ER -Golgi route.

Its subcellular location is the virion membrane. In terms of biological role, component of the entry fusion complex (EFC), which consists of 11 proteins. During cell infection, this complex mediates entry of the virion core into the host cytoplasm by a two-step mechanism consisting of lipid mixing of the viral and cellular membranes and subsequent pore formation. This chain is EFC-associated protein OPG053 (OPG053), found in Homo sapiens (Human).